A 122-amino-acid polypeptide reads, in one-letter code: Cytochrome c-556 (122 aa).

Positions 11, 111, 114, and 115 each coordinate heme. Residues M11, C111, C114, and H115 each contribute to the heme c site.

Monomer. In terms of processing, binds 1 heme c group covalently per subunit.

Low-spin monoheme cytochrome c. This is Cytochrome c-556 from Agrobacterium tumefaciens (strain II Chrys).